A 254-amino-acid chain; its full sequence is NAD-dependent glycerol dehydrogenase (254 aa).

18–47 (VVTGAASGIGKAMAELFSEKGAYVVLLDIK) serves as a coordination point for NAD(+). Tyrosine 160 acts as the Proton acceptor in catalysis. Lysine 164 is an NAD(+) binding site.

The protein belongs to the short-chain dehydrogenases/reductases (SDR) family. Mg(2+) serves as cofactor. It depends on Mn(2+) as a cofactor.

It localises to the cytoplasm. The enzyme catalyses glycerol + NAD(+) = dihydroxyacetone + NADH + H(+). Inhibited by Zn(2+). In terms of biological role, involved in the glycerol metabolism. Catalyzes the NAD-dependent oxidation of glycerol to dihydroxyacetone (glycerone). GolD specifically uses NAD. The polypeptide is NAD-dependent glycerol dehydrogenase (Listeria innocua serovar 6a (strain ATCC BAA-680 / CLIP 11262)).